Consider the following 219-residue polypeptide: Uracil-DNA glycosylase (219 aa).

Aspartate 62 (proton acceptor) is an active-site residue.

This sequence belongs to the uracil-DNA glycosylase (UDG) superfamily. UNG family.

Its subcellular location is the cytoplasm. The catalysed reaction is Hydrolyzes single-stranded DNA or mismatched double-stranded DNA and polynucleotides, releasing free uracil.. Excises uracil residues from the DNA which can arise as a result of misincorporation of dUMP residues by DNA polymerase or due to deamination of cytosine. This is Uracil-DNA glycosylase from Lactococcus lactis subsp. cremoris (strain MG1363).